The chain runs to 121 residues: Spermidine export protein MdtJ (121 aa).

4 helical membrane passes run 1-21 (MYIY…GTLS), 32-52 (GGFI…SFAV), 55-75 (IALG…ITLF), and 82-102 (ESLS…IVLI).

The protein belongs to the drug/metabolite transporter (DMT) superfamily. Small multidrug resistance (SMR) (TC 2.A.7.1) family. MdtJ subfamily. Forms a complex with MdtI.

The protein localises to the cell inner membrane. Functionally, catalyzes the excretion of spermidine. This Escherichia coli O139:H28 (strain E24377A / ETEC) protein is Spermidine export protein MdtJ.